The following is a 123-amino-acid chain: UPF0102 protein APJL_1381 (123 aa).

Belongs to the UPF0102 family.

The chain is UPF0102 protein APJL_1381 from Actinobacillus pleuropneumoniae serotype 3 (strain JL03).